The following is a 240-amino-acid chain: Uridylate kinase (240 aa).

12-15 contributes to the ATP binding site; that stretch reads KLSG. Residues 20–25 form an involved in allosteric activation by GTP region; it reads GKQGFG. Gly-54 lines the UMP pocket. The ATP site is built by Gly-55 and Arg-59. UMP contacts are provided by residues Asp-74 and 135–142; that span reads TGNPYFST. ATP-binding residues include Asn-163, Tyr-169, and Asp-172.

Belongs to the UMP kinase family. As to quaternary structure, homohexamer.

The protein localises to the cytoplasm. The enzyme catalyses UMP + ATP = UDP + ADP. Its pathway is pyrimidine metabolism; CTP biosynthesis via de novo pathway; UDP from UMP (UMPK route): step 1/1. Allosterically activated by GTP. Inhibited by UTP. Functionally, catalyzes the reversible phosphorylation of UMP to UDP. The polypeptide is Uridylate kinase (Geobacillus kaustophilus (strain HTA426)).